Here is a 212-residue protein sequence, read N- to C-terminus: uncharacterized protein (212 aa).

This sequence belongs to the flavoredoxin family. Requires FMN as cofactor.

This is an uncharacterized protein from Methanothermobacter thermautotrophicus (strain ATCC 29096 / DSM 1053 / JCM 10044 / NBRC 100330 / Delta H) (Methanobacterium thermoautotrophicum).